The chain runs to 216 residues: MTRLVLGSASSGRLKVLQQAGVDPLVVVSGVDEDAIMAGLGPAATPADVVRVLARAKAEQVATTLTGQQASVATDCLVIGCDSMLYIDGRLCGKPETVDDARQLWRSMAGRCGHLYTGHSVVRLTEQRVTHRDDETSTTTVHFATPSDDDLEAYLATGESLKVAGGFTLDGLGGWFITGVEGDPSAVVGIGLPLTRDLISRAGISIAALWASNPLP.

D82 (proton acceptor) is an active-site residue.

This sequence belongs to the Maf family. A divalent metal cation is required as a cofactor.

The protein localises to the cytoplasm. The enzyme catalyses a ribonucleoside 5'-triphosphate + H2O = a ribonucleoside 5'-phosphate + diphosphate + H(+). It carries out the reaction a 2'-deoxyribonucleoside 5'-triphosphate + H2O = a 2'-deoxyribonucleoside 5'-phosphate + diphosphate + H(+). Nucleoside triphosphate pyrophosphatase. May have a dual role in cell division arrest and in preventing the incorporation of modified nucleotides into cellular nucleic acids. This is Nucleoside triphosphate pyrophosphatase from Mycobacterium marinum (strain ATCC BAA-535 / M).